Reading from the N-terminus, the 358-residue chain is MQFVALLAALGAPLALAASIPAAHNNSSIIDVKLAATGNSMIKAIITNNGDRTLNLLKFNTIMDEHPTRKVKVYQDGAEVQFTGMLPRYKMSDLTPDFFVNLGPKASVEHSFDLAATHDLSRGGKITVSANGVVPTAEENETTITGHTHYESNELTMDVDGKEAAAVEQSMGGDSPAGVIDKRSNIVTSSCRGNQLQMLKTALANSARLSKAAASAAQRNPRKFQEYFKTTDSSTVQKVVSRFMSVARESTSTGKTTYYCNDTRDGCKPGVLAYTLPSKNQVFNCPSYYKLPALNNRCHGQDMATTTLHELTHNPAVVTPFCEDLGYGYDRVSRLPASKAVQNADTYSLFANAVYLGC.

Residues 1–17 (MQFVALLAALGAPLALA) form the signal peptide. A propeptide spanning residues 18–183 (ASIPAAHNNS…DSPAGVIDKR (166 aa)) is cleaved from the precursor. 2 disulfide bridges follow: Cys-191-Cys-260 and Cys-267-Cys-285. His-309 is a Zn(2+) binding site. Glu-310 is a catalytic residue. Residues His-313 and Asp-324 each contribute to the Zn(2+) site.

The protein belongs to the peptidase M35 family. It depends on Zn(2+) as a cofactor.

The protein resides in the secreted. The enzyme catalyses Preferential cleavage of bonds with hydrophobic residues in P1'. Also 3-Asn-|-Gln-4 and 8-Gly-|-Ser-9 bonds in insulin B chain.. Functionally, secreted metalloproteinase that allows assimilation of proteinaceous substrates. Shows high activities on basic nuclear substrates such as histone and protamine. May be involved in virulence. This Arthroderma gypseum (strain ATCC MYA-4604 / CBS 118893) (Microsporum gypseum) protein is Neutral protease 2 homolog MGYG_02351.